We begin with the raw amino-acid sequence, 319 residues long: NADH-quinone oxidoreductase subunit H 1 (319 aa).

9 consecutive transmembrane segments (helical) span residues 1-21, 77-97, 107-127, 147-167, 179-199, 214-234, 238-258, 262-282, and 293-313; these read MIGLIITAIISAVLIMALLVV, ILAPAIAATPVLAGFGVVAFG, VGVLFLLGMMGLTAYAAMLGA, LAYEVFLGLSLMGAVMLAGSL, VWFVVLQPLGAALFCIAGVAA, LVAGFITEYTGMSFGLFFLGE, VLLVSALAVTLFFGGWLGPWL, IWFGLKTAVIAVVFVWLRATL, and FAWKIALPLSLLNLLLTGIVV.

It belongs to the complex I subunit 1 family. In terms of assembly, NDH-1 is composed of 14 different subunits. Subunits NuoA, H, J, K, L, M, N constitute the membrane sector of the complex.

The protein resides in the cell inner membrane. The catalysed reaction is a quinone + NADH + 5 H(+)(in) = a quinol + NAD(+) + 4 H(+)(out). NDH-1 shuttles electrons from NADH, via FMN and iron-sulfur (Fe-S) centers, to quinones in the respiratory chain. The immediate electron acceptor for the enzyme in this species is believed to be ubiquinone. Couples the redox reaction to proton translocation (for every two electrons transferred, four hydrogen ions are translocated across the cytoplasmic membrane), and thus conserves the redox energy in a proton gradient. This subunit may bind ubiquinone. This is NADH-quinone oxidoreductase subunit H 1 from Rhodopseudomonas palustris (strain HaA2).